The following is a 545-amino-acid chain: Protein BTN1 (545 aa).

Residues 23–49 (AHSSASDPRRTMVTNTSESPLASRQAT) form a disordered region. Polar residues predominate over residues 34-49 (MVTNTSESPLASRQAT). Helical transmembrane passes span 66–86 (AFFL…TAAL), 97–117 (LVSF…PYFL), 127–147 (VWSC…FPAL), 205–225 (VGWF…AWWV), and 234–254 (GMAI…IILP). Residues 276–304 (TEDDAVERSSSDDQPTTANDDRQDSTIHI) are disordered. Helical transmembrane passes span 322–342 (MALL…VYAM), 408–428 (LLWL…TESL), and 440–460 (LVIV…VSVF).

The protein belongs to the battenin family.

Its subcellular location is the vacuole membrane. Functionally, involved in vacuolar transport and vacuole pH homeostasis. Also required for cytokinesis. This is Protein BTN1 (BTN1) from Mycosarcoma maydis (Corn smut fungus).